The sequence spans 243 residues: Zinc import ATP-binding protein ZnuC (243 aa).

An ABC transporter domain is found at Ile-4–Gly-219. An ATP-binding site is contributed by Gly-36 to Ser-43.

Belongs to the ABC transporter superfamily. Zinc importer (TC 3.A.1.15.5) family. In terms of assembly, the complex is composed of two ATP-binding proteins (ZnuC), two transmembrane proteins (ZnuB) and a solute-binding protein (ZnuA).

The protein localises to the cell inner membrane. The catalysed reaction is Zn(2+)(out) + ATP(in) + H2O(in) = Zn(2+)(in) + ADP(in) + phosphate(in) + H(+)(in). Part of the ABC transporter complex ZnuABC involved in zinc import. Responsible for energy coupling to the transport system. The sequence is that of Zinc import ATP-binding protein ZnuC from Cereibacter sphaeroides (strain ATCC 17023 / DSM 158 / JCM 6121 / CCUG 31486 / LMG 2827 / NBRC 12203 / NCIMB 8253 / ATH 2.4.1.) (Rhodobacter sphaeroides).